The following is a 247-amino-acid chain: Large ribosomal subunit protein uL3 (247 aa).

2 disordered regions span residues 140 to 164 and 212 to 247; these read SHRS…KMPG and LPKE…KEGA. Glutamine 151 is modified (N5-methylglutamine). Over residues 232-247 the composition is skewed to basic and acidic residues; sequence DEDKAPADTPAEKEGA.

The protein belongs to the universal ribosomal protein uL3 family. As to quaternary structure, part of the 50S ribosomal subunit. Forms a cluster with proteins L14 and L19. Methylated by PrmB.

In terms of biological role, one of the primary rRNA binding proteins, it binds directly near the 3'-end of the 23S rRNA, where it nucleates assembly of the 50S subunit. This is Large ribosomal subunit protein uL3 from Nitrobacter winogradskyi (strain ATCC 25391 / DSM 10237 / CIP 104748 / NCIMB 11846 / Nb-255).